Reading from the N-terminus, the 327-residue chain is Golgi to ER traffic protein 4 homolog (327 aa).

A2 is subject to N-acetylalanine. S12 is subject to Phosphoserine. The interacts with BAG6 stretch occupies residues 195 to 271 (FVAQAVLQFL…YQPSLRRDPM (77 aa)). The segment at 307–327 (GSSEQEDGEESPSDGSPIELD) is disordered.

Belongs to the GET4 family. Component of the BAG6/BAT3 complex, at least composed of BAG6, UBL4A and GET4/TRC35. Interacts with BAG6; the interaction is direct and localizes BAG6 to the cytosol. Interacts with GET3. Ubiquitinated by RNF12, leading to proteasomal degradation. When unassembled from BAG6; ubiquitinylation is modulated by BAG6 quality control role and effectuated by RNF126.

The protein resides in the cytoplasm. It localises to the cytosol. Its function is as follows. As part of a cytosolic protein quality control complex, the BAG6/BAT3 complex, maintains misfolded and hydrophobic patches-containing proteins in a soluble state and participates in their proper delivery to the endoplasmic reticulum or alternatively can promote their sorting to the proteasome where they undergo degradation. The BAG6/BAT3 complex is involved in the post-translational delivery of tail-anchored/type II transmembrane proteins to the endoplasmic reticulum membrane. Recruited to ribosomes, it interacts with the transmembrane region of newly synthesized tail-anchored proteins and together with SGTA and ASNA1 mediates their delivery to the endoplasmic reticulum. Client proteins that cannot be properly delivered to the endoplasmic reticulum are ubiquitinated and sorted to the proteasome. Similarly, the BAG6/BAT3 complex also functions as a sorting platform for proteins of the secretory pathway that are mislocalized to the cytosol either delivering them to the proteasome for degradation or to the endoplasmic reticulum. The BAG6/BAT3 complex also plays a role in the endoplasmic reticulum-associated degradation (ERAD), a quality control mechanism that eliminates unwanted proteins of the endoplasmic reticulum through their retrotranslocation to the cytosol and their targeting to the proteasome. It maintains these retrotranslocated proteins in an unfolded yet soluble state condition in the cytosol to ensure their proper delivery to the proteasome. The sequence is that of Golgi to ER traffic protein 4 homolog from Homo sapiens (Human).